We begin with the raw amino-acid sequence, 549 residues long: Chaperonin GroEL (549 aa).

ATP-binding positions include 30-33 (TLGP), lysine 51, 87-91 (DGTTT), glycine 415, and aspartate 496.

This sequence belongs to the chaperonin (HSP60) family. Forms a cylinder of 14 subunits composed of two heptameric rings stacked back-to-back. Interacts with the co-chaperonin GroES.

The protein resides in the cytoplasm. The enzyme catalyses ATP + H2O + a folded polypeptide = ADP + phosphate + an unfolded polypeptide.. Functionally, together with its co-chaperonin GroES, plays an essential role in assisting protein folding. The GroEL-GroES system forms a nano-cage that allows encapsulation of the non-native substrate proteins and provides a physical environment optimized to promote and accelerate protein folding. The protein is Chaperonin GroEL of Acidiphilium cryptum (strain JF-5).